The chain runs to 804 residues: Leucine--tRNA ligase (804 aa).

The short motif at 40 to 51 (PYPSGAGLHVGH) is the 'HIGH' region element. A 'KMSKS' region motif is present at residues 576-580 (KMSKS). Lys-579 serves as a coordination point for ATP.

Belongs to the class-I aminoacyl-tRNA synthetase family.

The protein localises to the cytoplasm. It carries out the reaction tRNA(Leu) + L-leucine + ATP = L-leucyl-tRNA(Leu) + AMP + diphosphate. The protein is Leucine--tRNA ligase of Staphylococcus epidermidis (strain ATCC 35984 / DSM 28319 / BCRC 17069 / CCUG 31568 / BM 3577 / RP62A).